Consider the following 428-residue polypeptide: Serine--tRNA ligase (428 aa).

235-237 (TAE) serves as a coordination point for L-serine. Position 266–268 (266–268 (RSE)) interacts with ATP. Residue Glu289 participates in L-serine binding. Position 353–356 (353–356 (EISS)) interacts with ATP. Ser389 is a binding site for L-serine.

The protein belongs to the class-II aminoacyl-tRNA synthetase family. Type-1 seryl-tRNA synthetase subfamily. In terms of assembly, homodimer. The tRNA molecule binds across the dimer.

Its subcellular location is the cytoplasm. It carries out the reaction tRNA(Ser) + L-serine + ATP = L-seryl-tRNA(Ser) + AMP + diphosphate + H(+). The catalysed reaction is tRNA(Sec) + L-serine + ATP = L-seryl-tRNA(Sec) + AMP + diphosphate + H(+). Its pathway is aminoacyl-tRNA biosynthesis; selenocysteinyl-tRNA(Sec) biosynthesis; L-seryl-tRNA(Sec) from L-serine and tRNA(Sec): step 1/1. Its function is as follows. Catalyzes the attachment of serine to tRNA(Ser). Is also able to aminoacylate tRNA(Sec) with serine, to form the misacylated tRNA L-seryl-tRNA(Sec), which will be further converted into selenocysteinyl-tRNA(Sec). This Shewanella baltica (strain OS185) protein is Serine--tRNA ligase.